The chain runs to 319 residues: Annexin A4 (319 aa).

At Ala2 the chain carries N-acetylalanine. Position 7 is a phosphothreonine (Thr7). Ser12 carries the phosphoserine modification. 4 Annexin repeats span residues 14–85 (FNAM…GMMT), 86–157 (PTVL…SLSA), 169–241 (ALVR…AIVK), and 245–316 (NKSA…VLCG). Lys213, Lys293, and Lys300 each carry N6-acetyllysine.

The protein belongs to the annexin family.

The protein localises to the zymogen granule membrane. Its function is as follows. Calcium/phospholipid-binding protein which promotes membrane fusion and is involved in exocytosis. The sequence is that of Annexin A4 from Homo sapiens (Human).